Reading from the N-terminus, the 233-residue chain is Adenosine 5'-phosphosulfate reductase 1 (233 aa).

Residues C120, C121, C203, and C206 each coordinate [4Fe-4S] cluster. Residue C229 is the Nucleophile; cysteine thiosulfonate intermediate of the active site.

This sequence belongs to the PAPS reductase family. CysH subfamily. The cofactor is [4Fe-4S] cluster.

Its subcellular location is the cytoplasm. The enzyme catalyses [thioredoxin]-disulfide + sulfite + AMP + 2 H(+) = adenosine 5'-phosphosulfate + [thioredoxin]-dithiol. Its pathway is sulfur metabolism; hydrogen sulfide biosynthesis; sulfite from sulfate. In terms of biological role, catalyzes the formation of sulfite from adenosine 5'-phosphosulfate (APS) using thioredoxin as an electron donor. In Bacillus subtilis (strain 168), this protein is Adenosine 5'-phosphosulfate reductase 1 (cysH).